We begin with the raw amino-acid sequence, 2172 residues long: Non-reducing polyketide synthase dpfgA (2172 aa).

Residues 74–181 (EWIKCGNSSL…LALCVGALVD (108 aa)) form an N-terminal acylcarrier protein transacylase domain (SAT) region. Positions 389–783 (DDSIAIIGVS…GTNAAMLVCQ (395 aa)) constitute a Ketosynthase family 3 (KS3) domain. Active-site for beta-ketoacyl synthase activity residues include C529, H665, and H706. Residues 895 to 1197 (VFAGQTGRQA…SFHSILLQGQ (303 aa)) form a malonyl-CoA:ACP transacylase (MAT) domain region. S981 serves as the catalytic For acyl/malonyl transferase activity. The N-terminal hotdog fold stretch occupies residues 1270–1403 (PELVSLAGPT…GTINWQGQGC (134 aa)). The PKS/mFAS DH domain occupies 1270 to 1581 (PELVSLAGPT…LKRIPIRSLQ (312 aa)). Positions 1277–1575 (GPTDGETVEF…EIIGASLKRI (299 aa)) are product template (PT) domain. Positions 1428–1581 (SASTVQGLFV…LKRIPIRSLQ (154 aa)) are C-terminal hotdog fold. 2 disordered regions span residues 1608–1631 (DSDS…HADF) and 1650–1672 (YPMD…VLSD). Residues 1650 to 1668 (YPMDSSSFSSAQPPSSASS) show a composition bias toward low complexity. A Carrier domain is found at 1671-1747 (SDHDQESTAL…DLYRMVLNHD (77 aa)). O-(pantetheine 4'-phosphoryl)serine is present on S1707. Residues 1751–1773 (DRGSTVLSDKAPKSKSDSSLHGQ) form a disordered region. The interval 1975–2155 (EFLHRVLSRL…DAGFIHVDWT (181 aa)) is methyltransferase (CMeT) domain.

It participates in secondary metabolite biosynthesis; terpenoid biosynthesis. Non-reducing polyketide synthase; part of the gene cluster that mediates the biosynthesis of diterpenoid pyrones. The first step of the pathway is the synthesis of the alpha-pyrone moiety by the polyketide synthase dpfgA via condensation of one acetyl-CoA starter unit with 3 malonyl-CoA units and 2 methylations. The alpha-pyrone is then combined with geranylgeranyl pyrophosphate (GGPP) formed by the GGPP synthase dpfgD through the action of the prenyltransferase dpfgC to yield a linear alpha-pyrone diterpenoid. Subsequent steps in the diterpenoid pyrone biosynthetic pathway involve the decalin core formation, which is initiated by the epoxidation of the C10-C11 olefin by the FAD-dependent oxidoreductase dpfgE, and is followed by a cyclization cascade catalyzed by the terpene cyclase dpfgB. The short chain dehydrogenase/reductase dpfgG then oxidizes the 8S hydroxy group to a ketone and the short chain dehydrogenase/reductase dpfgH reduces the ketone to the 8R hydroxy group to yield higginsianin B. Higginsianin B is further methylated by the methyltransferase dpfgI to produce the intermediate named FDDP B. The cytochrome P450 monooxygenase dfgpJ then catalyzes a three-step oxidation at C-27 to generate a carboxylic acid as well as C-26 hydroxylation. Finally, methyltransferase dpfgK methylates the carboxylic acid generated by dpfgJ, yielding the final diterpenoid pyrones from the pathway which were named FDDP D and FDDP E. The polypeptide is Non-reducing polyketide synthase dpfgA (Gibberella zeae (strain ATCC MYA-4620 / CBS 123657 / FGSC 9075 / NRRL 31084 / PH-1) (Wheat head blight fungus)).